The sequence spans 497 residues: MALWRGSAYAGFLALAVGCVFLLEPELPGSALRSLWSSLCLGPAPAPPGPVSPEGRLAAAWDALIVRPVRRWRRVAVGVNACVDVVLSGVKLLQALGLSPGNGKDHSILHSRNDLEEAFIHFMGKGAAAERFFSDKETFHDIAQVASEFPGAQHYVGGNAALIGQKFAANSDLKVLLCGPVGPKLHELLDDNVFVPPESLQEVDEFHLILEYQAGEEWGQLKAPHANRFIFSHDLSNGAMNMLEVFVSSLEEFQPDLVVLSGLHMMEGQSKELQRKRLLEVVTSISDIPTGIPVHLELASMTNRELMSSIVHQQVFPAVTSLGLNEQELLFLTQSASGPHSSLSSWNGVPDVGMVSDILFWILKEHGRSKSRASDLTRIHFHTLVYHILATVDGHWANQLAAVAAGARVAGTQACATETIDTSRVSLRAPQEFMTSHSEAGSRIVLNPNKPVVEWHREGISFHFTPVLVCKDPIRTVGLGDAISAEGLFYSEVHPHY.

An N-terminal signal peptide occupies residues 1–22 (MALWRGSAYAGFLALAVGCVFL). Positions 52-497 (SPEGRLAAAW…LFYSEVHPHY (446 aa)) constitute an ADPK domain. Residues glutamate 297, glutamate 328, and aspartate 481 each coordinate Mg(2+). Catalysis depends on aspartate 481, which acts as the Proton acceptor.

It belongs to the ADP-dependent glucokinase family. In terms of assembly, monomer. Requires Mg(2+) as cofactor.

It is found in the secreted. The catalysed reaction is D-glucose + ADP = D-glucose 6-phosphate + AMP + H(+). It participates in carbohydrate degradation; glycolysis. Its function is as follows. Catalyzes the phosphorylation of D-glucose to D-glucose 6-phosphate using ADP as the phosphate donor. GDP and CDP can replace ADP, but with reduced efficiency. This Homo sapiens (Human) protein is ADP-dependent glucokinase (ADPGK).